The primary structure comprises 95 residues: uncharacterized protein (95 aa).

A coiled-coil region spans residues 60–89 (VKNMINRIVEELDKRIDEIKEGLNELEKSG).

This is an uncharacterized protein from Sulfolobus islandicus filamentous virus (isolate Iceland/Hveragerdi) (SIFV).